The following is a 945-amino-acid chain: Leucine--tRNA ligase (945 aa).

The 'HIGH' region motif lies at 43–53 (PYPNGAVHIGH). The 'KMSKS' region motif lies at 638 to 642 (KMSKS). Lysine 641 contacts ATP.

It belongs to the class-I aminoacyl-tRNA synthetase family.

Its subcellular location is the cytoplasm. It catalyses the reaction tRNA(Leu) + L-leucine + ATP = L-leucyl-tRNA(Leu) + AMP + diphosphate. The chain is Leucine--tRNA ligase from Pyrobaculum islandicum (strain DSM 4184 / JCM 9189 / GEO3).